A 296-amino-acid polypeptide reads, in one-letter code: Nucleotide-binding protein SGO_0954 (296 aa).

Position 13 to 20 (13 to 20 (GMSGAGKT)) interacts with ATP. 63–66 (DMRS) is a binding site for GTP.

This sequence belongs to the RapZ-like family.

Displays ATPase and GTPase activities. The chain is Nucleotide-binding protein SGO_0954 from Streptococcus gordonii (strain Challis / ATCC 35105 / BCRC 15272 / CH1 / DL1 / V288).